The sequence spans 466 residues: Adenosylhomocysteinase (466 aa).

The substrate site is built by T57, D132, and E192. 193–195 serves as a coordination point for NAD(+); the sequence is TTT. K222 and D226 together coordinate substrate. NAD(+)-binding positions include N227, 256 to 261, E279, N314, 335 to 337, and N380; these read GYGDVG and IGH.

Belongs to the adenosylhomocysteinase family. NAD(+) serves as cofactor.

The protein localises to the cytoplasm. The enzyme catalyses S-adenosyl-L-homocysteine + H2O = L-homocysteine + adenosine. It functions in the pathway amino-acid biosynthesis; L-homocysteine biosynthesis; L-homocysteine from S-adenosyl-L-homocysteine: step 1/1. In terms of biological role, may play a key role in the regulation of the intracellular concentration of adenosylhomocysteine. In Rhizobium rhizogenes (strain K84 / ATCC BAA-868) (Agrobacterium radiobacter), this protein is Adenosylhomocysteinase.